The primary structure comprises 288 residues: UPF0761 membrane protein HSM_1104 (288 aa).

6 helical membrane-spanning segments follow: residues 36–56 (TLALVPLIMVFFSVFAAFPVF), 92–112 (QMSAVGIISLIVVALMLIHSI), 127–147 (PAIFSFAIYWLILTLGPIVIA), 176–196 (LLSLMPFFLTWFIFTVLYMVV), 200–220 (KVSIIHSAAGALIAAVFFTLG), and 240–260 (AMATLPIMLLWIQLSWTAVLL).

This sequence belongs to the UPF0761 family.

Its subcellular location is the cell inner membrane. The polypeptide is UPF0761 membrane protein HSM_1104 (Histophilus somni (strain 2336) (Haemophilus somnus)).